A 707-amino-acid chain; its full sequence is Polyribonucleotide nucleotidyltransferase (707 aa).

2 residues coordinate Mg(2+): D485 and D491. A KH domain is found at 552-611; the sequence is PRIYTMKIDPKKIKDVIGKGGATIRTLTEETGTSIDIDDDGTVKIAAIDGNAVKEVMARI. One can recognise an S1 motif domain in the interval 621–689; that stretch reads GAVYTGKVTR…RQGRIRLTMK (69 aa).

It belongs to the polyribonucleotide nucleotidyltransferase family. In terms of assembly, component of the RNA degradosome, which is a multiprotein complex involved in RNA processing and mRNA degradation. Mg(2+) is required as a cofactor.

The protein resides in the cytoplasm. It catalyses the reaction RNA(n+1) + phosphate = RNA(n) + a ribonucleoside 5'-diphosphate. Involved in mRNA degradation. Catalyzes the phosphorolysis of single-stranded polyribonucleotides processively in the 3'- to 5'-direction. The chain is Polyribonucleotide nucleotidyltransferase from Actinobacillus succinogenes (strain ATCC 55618 / DSM 22257 / CCUG 43843 / 130Z).